A 664-amino-acid chain; its full sequence is Metal-nicotianamine transporter YSL2 (664 aa).

14 consecutive transmembrane segments (helical) span residues 31–51 (ITVR…VICL), 55–75 (LTTG…FVFL), 103–123 (CAVA…LLGL), 147–167 (GVGW…VVLV), 209–229 (GFIK…FYSG), 268–288 (LVNL…WPLI), 314–334 (FICI…ILFF), 378–398 (IPLW…IIAI), 409–429 (FVLV…YGAG), 457–477 (VVAG…SADL), 496–516 (VAQA…FFLF), 549–569 (SALP…AVAA), 594–614 (FLVG…VYVW), and 629–649 (VASG…LLAL).

Belongs to the YSL (TC 2.A.67.2) family. Expressed in roots, leaves and weakly in shoots. Restricted to the veins, to the central cylinder of the young roots and to the pericycle and the endodermis cells facing the meta-xylem tubes in older roots. Expressed in the vasculature of sepals, petals, anthers, stigma and siliques, but not in developing seeds or in meristematic zones.

It localises to the cell membrane. May be involved in the lateral transport of nicotianamine-chelated metals in the vasculature. The protein is Metal-nicotianamine transporter YSL2 (YSL2) of Arabidopsis thaliana (Mouse-ear cress).